The sequence spans 361 residues: Peptide chain release factor 1 (361 aa).

The residue at position 233 (Gln233) is an N5-methylglutamine. A compositionally biased stretch (basic and acidic residues) spans 280 to 293 (ERRKKEQERADSRR). Residues 280 to 307 (ERRKKEQERADSRRGQVGSGDRSERIRT) form a disordered region.

This sequence belongs to the prokaryotic/mitochondrial release factor family. Methylated by PrmC. Methylation increases the termination efficiency of RF1.

Its subcellular location is the cytoplasm. In terms of biological role, peptide chain release factor 1 directs the termination of translation in response to the peptide chain termination codons UAG and UAA. This Rickettsia massiliae (strain Mtu5) protein is Peptide chain release factor 1.